We begin with the raw amino-acid sequence, 605 residues long: MPPTGTEVGMIRNFCIIAHIDHGKSTLADRLLEVTHTLERNQMSTAQVLDDMDLERERGITIKSHAVQMRYTAKDGQDYILNLIDTPGHVDFSYEVSRSLAACEGALLVVDATQGVEAQTIANLYLAIEAGLEIIPVINKIDLPSSDVEGVARQIIDLIGVNRDEILRVSAKNGIGVDDLMEAIVARVPAPADNRQMPLRALIFDSVFDAYRGAIAYIRIVDGVLKKGDRVRFFANDKIFMADEIGTMSLKRNPVDILEAGNVGYLICSIKDVKDAKVGDTVTLVENPAAERLAGYKDVKPMVFSGLYPVESNEFEDLRESLEKLSLNDASLVYTPETSAALGFGFRCGFLGLLHMEIIQERLEREYGVNIITTVPNVEYRVIMTSGETVEVDNPSKMPETTKINWIEEPYVSMQIITMSEYIGNIMKLGMERRGEYKNTDYLDTSRVNIHFEFPLGEVVFDFHDKLKSISKGYASMDYEYIGYRRSDLVKLDVLLNGEPVDALSSIVHRSKSYEWGRKLCQKLKGIIPRQMYEVAIQAAIGSRVIARESISAMRKNVLAKCYGGDISRKRKLLEKQKEGKKRMKQVGRVEVPQEAFLAVLNIDE.

The tr-type G domain occupies 9–192; it reads GMIRNFCIIA…AIVARVPAPA (184 aa). GTP-binding positions include 21 to 26 and 139 to 142; these read DHGKST and NKID.

It belongs to the TRAFAC class translation factor GTPase superfamily. Classic translation factor GTPase family. LepA subfamily.

The protein resides in the cell inner membrane. It carries out the reaction GTP + H2O = GDP + phosphate + H(+). In terms of biological role, required for accurate and efficient protein synthesis under certain stress conditions. May act as a fidelity factor of the translation reaction, by catalyzing a one-codon backward translocation of tRNAs on improperly translocated ribosomes. Back-translocation proceeds from a post-translocation (POST) complex to a pre-translocation (PRE) complex, thus giving elongation factor G a second chance to translocate the tRNAs correctly. Binds to ribosomes in a GTP-dependent manner. This chain is Elongation factor 4, found in Chlorobaculum tepidum (strain ATCC 49652 / DSM 12025 / NBRC 103806 / TLS) (Chlorobium tepidum).